The sequence spans 595 residues: UvrABC system protein C (595 aa).

The GIY-YIG domain occupies 14–91; that stretch reads SNPGCYLHKD…IQENMPKFNI (78 aa). Residues 196–231 enclose the UVR domain; that stretch reads DKIVNQLKAKMKDMSDQMEFERAAEYRDLIEAVSTL.

The protein belongs to the UvrC family. As to quaternary structure, interacts with UvrB in an incision complex.

Its subcellular location is the cytoplasm. Functionally, the UvrABC repair system catalyzes the recognition and processing of DNA lesions. UvrC both incises the 5' and 3' sides of the lesion. The N-terminal half is responsible for the 3' incision and the C-terminal half is responsible for the 5' incision. The polypeptide is UvrABC system protein C (Streptococcus thermophilus (strain CNRZ 1066)).